The sequence spans 256 residues: Lysine-rich coiled-coil protein 1 (256 aa).

2 disordered regions span residues Gln61–Arg83 and Gly141–Phe256. 2 stretches are compositionally biased toward polar residues: residues Pro64–Gln79 and Gly141–Gln153. Basic and acidic residues-rich tracts occupy residues His161–Lys188 and Lys218–Glu227. Positions Thr208 to Met247 form a coiled coil.

This Rattus norvegicus (Rat) protein is Lysine-rich coiled-coil protein 1 (Krcc1).